Consider the following 1756-residue polypeptide: Multifunctional conjugation protein TraI (1756 aa).

Residues 1 to 330 (MLSFSVVKSA…TQAIAGLSER (330 aa)) form a DNA relaxase region. Residue Tyr-16 is the O-(5'-phospho-DNA)-tyrosine intermediate; for relaxase activity of the active site. Tyr-17 functions as the Relaxase in the catalytic mechanism. Residues His-146, His-157, and His-159 each coordinate Mg(2+). A DNA helicase I region spans residues 950 to 1500 (GKEAVTPLME…LRDVAAGRAV (551 aa)). Residue 992-999 (GYAGVGKT) participates in ATP binding. Residues 1719–1753 (EQEAVREVARENLLQERLQQIERDMVRDLQKEKTL) adopt a coiled-coil conformation.

To TraI of plasmid F. Monomer. Part of the relaxosome, a complex composed of plasmid-encodes TraI, TraM, TraY and host-encoded IHF bound to the F plasmid origin of transfer (oriT). Directly contacts coupling protein TraD. Seems to directly contact TraM via its C-terminus. Requires Mg(2+) as cofactor.

Its subcellular location is the cytoplasm. It catalyses the reaction ATP-independent breakage of single-stranded DNA, followed by passage and rejoining.. It carries out the reaction ATP + H2O = ADP + phosphate + H(+). Functionally, conjugative DNA transfer (CDT) is the unidirectional transfer of ssDNA plasmid from a donor to a recipient cell. It is the central mechanism by which antibiotic resistance and virulence factors are propagated in bacterial populations. Part of the relaxosome, which facilitates a site- and strand-specific cut in the origin of transfer by TraI, at the nic site. Relaxosome formation requires binding of IHF and TraY to the oriT region, which then facilitates binding of TraI relaxase. TraI forms a covalent 5'-phosphotyrosine intermediate linkage to the ssDNA. The transesterified T-strand moves from the donor cell to the recipient cell in a 5'to 3' direction, with the DNA helicase activity of TraI unwinding the DNA. DNA transfer occurs via the conjugative pore (transferosome) an intercellular junction mediated by a type IV secretion system, with TraD providing the means to link the relaxosome to the conjugative pore. The relaxase completes DNA transfer by reversing the covalent phosphotyrosine linkage and releasing the T-strand. In terms of biological role, traI has also been identified as DNA helicase I. DNA. helicase I is a potent, highly processive DNA-dependent ATPase, able to unwind about 1.1 kb dsDNA per second in a 5' to 3' manner. The protein is Multifunctional conjugation protein TraI (traI) of Escherichia coli.